Here is a 974-residue protein sequence, read N- to C-terminus: Ephrin type-B receptor 3 (974 aa).

The signal sequence occupies residues 1–16; that stretch reads MLPAVFVILALSAVQG. Topologically, residues 17 to 534 are extracellular; the sequence is LEETLMDTKW…RSSLQEQVPM (518 aa). The Eph LBD domain occupies 18–196; that stretch reads EETLMDTKWT…FFKKCPRTTA (179 aa). A disulfide bridge links C60 with C178. Fibronectin type-III domains are found at residues 318–426 and 427–522; these read VPSA…TNQA and APSS…IAED. N330 and N420 each carry an N-linked (GlcNAc...) asparagine glycan. A helical membrane pass occupies residues 535–555; the sequence is VVGSVTAGLIFIIAVVIIVIV. The Cytoplasmic portion of the chain corresponds to 556 to 974; the sequence is CFSRKQRNDS…QMSQTLPVQV (419 aa). Y590 bears the Phosphotyrosine; by autocatalysis mark. The Protein kinase domain maps to 609-872; sequence VKIEEVIGAG…QIVSSLDKLI (264 aa). ATP is bound by residues 615–623 and K641; that span reads IGAGEFGEV. D734 functions as the Proton acceptor in the catalytic mechanism. The region spanning 901-965 is the SAM domain; the sequence is TTFPTVSDWL…LNSVQDMRLQ (65 aa). Residues 972–974 carry the PDZ-binding motif; it reads VQV.

It belongs to the protein kinase superfamily. Tyr protein kinase family. Ephrin receptor subfamily. In terms of assembly, heterotetramer upon binding of the ligand. The heterotetramer is composed of an ephrin dimer and a receptor dimer. Oligomerization is probably required to induce biological responses. Phosphorylated. Autophosphorylates upon ligand-binding. Autophosphorylation on Tyr-590 is required for interaction with SH2 domain-containing proteins. In terms of tissue distribution, expressed in the embryo in pre-somitic mesoderm, caudal somites, midbrain, and cement gland. Most abundant in adult brain, eye, heart, lung and ovary. Lower levels in intestine, kidney, oviduct and pharynx.

It is found in the cell membrane. Its subcellular location is the cell projection. It localises to the dendrite. The enzyme catalyses L-tyrosyl-[protein] + ATP = O-phospho-L-tyrosyl-[protein] + ADP + H(+). Receptor tyrosine kinase which binds promiscuously transmembrane ephrin-B family ligands residing on adjacent cells, leading to contact-dependent bidirectional signaling into neighboring cells. The signaling pathway downstream of the receptor is referred to as forward signaling while the signaling pathway downstream of the ephrin ligand is referred to as reverse signaling. Generally has an overlapping and redundant function with EPHB2. Like EPHB2, functions in axon guidance during development. In addition to its role in axon guidance also plays an important redundant role with other ephrin-B receptors in development and maturation of dendritic spines and the formation of excitatory synapses. May control other aspects of development through regulation of cell migration and positioning. The chain is Ephrin type-B receptor 3 (ephb3) from Xenopus laevis (African clawed frog).